Consider the following 465-residue polypeptide: Ribulose bisphosphate carboxylase large chain (465 aa).

The residue at position 4 (lysine 4) is an N6,N6,N6-trimethyllysine. 2 residues coordinate substrate: asparagine 113 and threonine 163. Lysine 165 acts as the Proton acceptor in catalysis. Substrate is bound at residue lysine 167. Mg(2+) is bound by residues lysine 191, aspartate 193, and glutamate 194. At lysine 191 the chain carries N6-carboxylysine. Histidine 284 acts as the Proton acceptor in catalysis. Positions 285, 317, and 369 each coordinate substrate.

It belongs to the RuBisCO large chain family. Type I subfamily. Heterohexadecamer of 8 large chains and 8 small chains; disulfide-linked. The disulfide link is formed within the large subunit homodimers. Mg(2+) is required as a cofactor. In terms of processing, the disulfide bond which can form in the large chain dimeric partners within the hexadecamer appears to be associated with oxidative stress and protein turnover.

It localises to the plastid. The protein resides in the chloroplast. The enzyme catalyses 2 (2R)-3-phosphoglycerate + 2 H(+) = D-ribulose 1,5-bisphosphate + CO2 + H2O. The catalysed reaction is D-ribulose 1,5-bisphosphate + O2 = 2-phosphoglycolate + (2R)-3-phosphoglycerate + 2 H(+). Its function is as follows. RuBisCO catalyzes two reactions: the carboxylation of D-ribulose 1,5-bisphosphate, the primary event in carbon dioxide fixation, as well as the oxidative fragmentation of the pentose substrate in the photorespiration process. Both reactions occur simultaneously and in competition at the same active site. In Cassia fistula (Golden shower tree), this protein is Ribulose bisphosphate carboxylase large chain.